The chain runs to 279 residues: MAESFVRLEHVFYKYEDTEKYAVKDVSISAQKGEWVALVGHNGSGKSTIAKLLNGLLFPEDGLIKIGHFVLSEKNIWEIRRQVGMVFQNPDNQFVGATVQDDVAFGLENHGVPHDTMVERVESALNEVGMQSYALHEPARLSGGQKQRVAIAGVLALQPDVIILDEATSMLDPRGRAEVMETIRIMREQEDITVISITHDLDEVLFADRVIVMNNGEIHSEGTPKEIFEQADAMRAIGLGVPFIIELQEKLVAGGFETGSTVLSEGALLDQLWKLNSNN.

The ABC transporter domain maps to Val6–Gly240. An ATP-binding site is contributed by Gly40–Ser47.

It belongs to the ABC transporter superfamily. Energy-coupling factor EcfA family. In terms of assembly, forms a stable energy-coupling factor (ECF) transporter complex composed of 2 membrane-embedded substrate-binding proteins (S component), 2 ATP-binding proteins (A component) and 2 transmembrane proteins (T component).

The protein resides in the cell membrane. Its function is as follows. ATP-binding (A) component of a common energy-coupling factor (ECF) ABC-transporter complex. Unlike classic ABC transporters this ECF transporter provides the energy necessary to transport a number of different substrates. The sequence is that of Energy-coupling factor transporter ATP-binding protein EcfA1 from Listeria innocua serovar 6a (strain ATCC BAA-680 / CLIP 11262).